Consider the following 475-residue polypeptide: Nitrogenase vanadium-iron protein beta chain (475 aa).

The [8Fe-7S] cluster site is built by cysteine 31, cysteine 56, cysteine 115, and serine 153.

It belongs to the NifD/NifK/NifE/NifN family. Hexamer of two alpha, two beta, and two delta chains. The cofactor is [8Fe-7S] cluster.

It catalyses the reaction N2 + 8 reduced [2Fe-2S]-[ferredoxin] + 16 ATP + 16 H2O = H2 + 8 oxidized [2Fe-2S]-[ferredoxin] + 2 NH4(+) + 16 ADP + 16 phosphate + 6 H(+). Functionally, this vanadium-iron protein is part of the nitrogenase complex that catalyzes the key enzymatic reactions in nitrogen fixation. The polypeptide is Nitrogenase vanadium-iron protein beta chain (vnfK) (Azotobacter vinelandii).